The following is a 230-amino-acid chain: Ribonuclease 3 (230 aa).

One can recognise an RNase III domain in the interval 5–125 (YSRLYKILGY…IIGAIYLDSD (121 aa)). A Mg(2+)-binding site is contributed by glutamate 40. Aspartate 44 is an active-site residue. 2 residues coordinate Mg(2+): aspartate 111 and glutamate 114. Glutamate 114 is a catalytic residue. The region spanning 153–223 (DSKSKLQEIL…AEKMIQILSQ (71 aa)) is the DRBM domain.

This sequence belongs to the ribonuclease III family. Homodimer. Mg(2+) is required as a cofactor.

It localises to the cytoplasm. The catalysed reaction is Endonucleolytic cleavage to 5'-phosphomonoester.. In terms of biological role, digests double-stranded RNA. Involved in the processing of primary rRNA transcript to yield the immediate precursors to the large and small rRNAs (23S and 16S). Processes some mRNAs, and tRNAs when they are encoded in the rRNA operon. Processes pre-crRNA and tracrRNA of type II CRISPR loci if present in the organism. The polypeptide is Ribonuclease 3 (Francisella philomiragia subsp. philomiragia (strain ATCC 25017 / CCUG 19701 / FSC 153 / O#319-036)).